A 324-amino-acid polypeptide reads, in one-letter code: Zinc transporter ZIP1 (324 aa).

Residues M1–K30 are Extracellular-facing. A helical membrane pass occupies residues L31–V51. Residues L52–A68 lie on the Cytoplasmic side of the membrane. Residues L69–L89 traverse the membrane as a helical segment. At P90–H104 the chain is on the extracellular side. Residues V105–V125 form a helical membrane-spanning segment. At M126–R179 the chain is on the cytoplasmic side. Residues A180–L200 traverse the membrane as a helical segment. The Extracellular portion of the chain corresponds to Q201 to R206. Residues A207–L227 traverse the membrane as a helical segment. Topologically, residues R228–Q237 are cytoplasmic. The helical transmembrane segment at V238 to T258 threads the bilayer. At A259 to Q272 the chain is on the extracellular side. A helical membrane pass occupies residues S273–P293. Residues Q294–I303 are Cytoplasmic-facing. The chain crosses the membrane as a helical span at residues L304–I324.

The protein belongs to the ZIP transporter (TC 2.A.5) family.

The protein resides in the cell membrane. It is found in the endoplasmic reticulum membrane. The catalysed reaction is Zn(2+)(in) = Zn(2+)(out). Functionally, transporter for the divalent cation Zn(2+). Mediates the influx of Zn(2+) into cells from extracellular space. The polypeptide is Zinc transporter ZIP1 (SLC39A1) (Bos taurus (Bovine)).